A 348-amino-acid chain; its full sequence is Phosphoribosylformylglycinamidine cyclo-ligase (348 aa).

The protein belongs to the AIR synthase family.

It is found in the cytoplasm. It catalyses the reaction 2-formamido-N(1)-(5-O-phospho-beta-D-ribosyl)acetamidine + ATP = 5-amino-1-(5-phospho-beta-D-ribosyl)imidazole + ADP + phosphate + H(+). It functions in the pathway purine metabolism; IMP biosynthesis via de novo pathway; 5-amino-1-(5-phospho-D-ribosyl)imidazole from N(2)-formyl-N(1)-(5-phospho-D-ribosyl)glycinamide: step 2/2. The polypeptide is Phosphoribosylformylglycinamidine cyclo-ligase (Cereibacter sphaeroides (strain KD131 / KCTC 12085) (Rhodobacter sphaeroides)).